We begin with the raw amino-acid sequence, 177 residues long: ATP synthase subunit b (177 aa).

Residues 16 to 36 form a helical membrane-spanning segment; the sequence is HLLLANMIVTIVVFLLLLILL.

Belongs to the ATPase B chain family. As to quaternary structure, F-type ATPases have 2 components, F(1) - the catalytic core - and F(0) - the membrane proton channel. F(1) has five subunits: alpha(3), beta(3), gamma(1), delta(1), epsilon(1). F(0) has three main subunits: a(1), b(2) and c(10-14). The alpha and beta chains form an alternating ring which encloses part of the gamma chain. F(1) is attached to F(0) by a central stalk formed by the gamma and epsilon chains, while a peripheral stalk is formed by the delta and b chains.

The protein resides in the cell membrane. Its function is as follows. F(1)F(0) ATP synthase produces ATP from ADP in the presence of a proton or sodium gradient. F-type ATPases consist of two structural domains, F(1) containing the extramembraneous catalytic core and F(0) containing the membrane proton channel, linked together by a central stalk and a peripheral stalk. During catalysis, ATP synthesis in the catalytic domain of F(1) is coupled via a rotary mechanism of the central stalk subunits to proton translocation. Functionally, component of the F(0) channel, it forms part of the peripheral stalk, linking F(1) to F(0). This is ATP synthase subunit b from Exiguobacterium sibiricum (strain DSM 17290 / CCUG 55495 / CIP 109462 / JCM 13490 / 255-15).